The chain runs to 737 residues: Transcription activator MSS11 (737 aa).

A disordered region spans residues 1–23 (MDNTTNINTNERSSNTDFSSAPN). Residues 51–83 (SKQLLYAHIYNYLIKNNYWNSAAKFLSEADLPL) enclose the LisH domain. Disordered stretches follow at residues 191–220 (TQNSFPVSEESFRPNGDGSNFNLNDPTNRN), 268–347 (LQSP…PTNQ), 413–439 (GNQNYQSNTRNNTAEETTPTNDNNANG), and 572–660 (KTNT…TKES). Positions 207–220 (DGSNFNLNDPTNRN) are enriched in polar residues. Over residues 269–314 (QSPAQPQQSSQQQIQQPQRQPQHQQQQQQQQQQQQQQQQQQQQQQQ) the composition is skewed to low complexity. 3 stretches are compositionally biased toward polar residues: residues 330–347 (SENSHSTGLMPSVPPTNQ), 421–439 (TRNNTAEETTPTNDNNANG), and 572–585 (KTNTSVPQNDSTSV). A compositionally biased stretch (low complexity) spans 590-643 (NNNNNNNNNNNNNNNSNNSNNNNNNNNSNNTPTVSQPSSKRTSSSSTTPNITTT). The span at 646-655 (PKRKQRVGKT) shows a compositional bias: basic residues.

It belongs to the MSS11 family. As to quaternary structure, interacts with FLO8, STE12 and TEC1.

The protein localises to the cytoplasm. The protein resides in the nucleus. Its function is as follows. Transcription factor that regulates pseudohyphal differentiation, invasive growth, floculation, adhesion and starch metabolism in response to nutrient availability. This is Transcription activator MSS11 (MSS11) from Saccharomyces cerevisiae (strain YJM789) (Baker's yeast).